The sequence spans 501 residues: V-type proton ATPase subunit B 2 (501 aa).

R392 is an ATP binding site.

It belongs to the ATPase alpha/beta chains family. As to quaternary structure, V-ATPase is a heteromultimeric enzyme made up of two complexes: the ATP-hydrolytic V1 complex and the proton translocation V0 complex. The V1 complex consists of three catalytic AB heterodimers that form a heterohexamer, three peripheral stalks each consisting of EG heterodimers, one central rotor including subunits D and F, and the regulatory subunits C and H. The proton translocation complex V0 consists of the proton transport subunit a, a ring of proteolipid subunits c9c'', rotary subunit d, subunits e and f, and the accessory subunits vah-19/Ac45 and vah-20/PRR. In terms of tissue distribution, predominantly expressed in male and hermaphrodite testis (at protein level).

The protein localises to the cytoplasm. Non-catalytic subunit of the V1 complex of vacuolar(H+)-ATPase (V-ATPase), a multisubunit enzyme composed of a peripheral complex (V1) that hydrolyzes ATP and a membrane integral complex (V0) that translocates protons. V-ATPase is responsible for acidifying and maintaining the pH of intracellular compartments and in some cell types, is targeted to the plasma membrane, where it is responsible for acidifying the extracellular environment. In neurons, required for necrotic cell death probably by promoting intracellular acidification. Required for spermatogenesis where it regulates the fibrous body-membranous organelle (FBMO) morphology in spermatocytes and the acidification of FBMO-derived secretory membranous organelles (MOs) as spermatids mature. In Caenorhabditis elegans, this protein is V-type proton ATPase subunit B 2.